We begin with the raw amino-acid sequence, 358 residues long: Small ribosomal subunit biogenesis GTPase RsgA 2 (358 aa).

Positions alanine 106 to isoleucine 261 constitute a CP-type G domain. GTP is bound by residues serine 151–aspartate 154 and glycine 203–threonine 211. Positions 284, 289, 291, and 297 each coordinate Zn(2+).

This sequence belongs to the TRAFAC class YlqF/YawG GTPase family. RsgA subfamily. Monomer. Associates with 30S ribosomal subunit, binds 16S rRNA. Zn(2+) serves as cofactor.

It localises to the cytoplasm. Its function is as follows. One of several proteins that assist in the late maturation steps of the functional core of the 30S ribosomal subunit. Helps release RbfA from mature subunits. May play a role in the assembly of ribosomal proteins into the subunit. Circularly permuted GTPase that catalyzes slow GTP hydrolysis, GTPase activity is stimulated by the 30S ribosomal subunit. The protein is Small ribosomal subunit biogenesis GTPase RsgA 2 of Vibrio parahaemolyticus serotype O3:K6 (strain RIMD 2210633).